Consider the following 316-residue polypeptide: HPr kinase/phosphorylase (316 aa).

Residues His143 and Lys164 contribute to the active site. 158–165 (GEAGSGKS) lines the ATP pocket. A Mg(2+)-binding site is contributed by Ser165. The active-site Proton acceptor; for phosphorylation activity. Proton donor; for dephosphorylation activity is Asp182. The important for the catalytic mechanism of both phosphorylation and dephosphorylation stretch occupies residues 206-215 (LEVRGLGVLN). Residue Glu207 participates in Mg(2+) binding. The active site involves Arg251. The interval 272 to 277 (PVMPGR) is important for the catalytic mechanism of dephosphorylation.

The protein belongs to the HPrK/P family. As to quaternary structure, homohexamer. Requires Mg(2+) as cofactor.

The enzyme catalyses [HPr protein]-L-serine + ATP = [HPr protein]-O-phospho-L-serine + ADP + H(+). It catalyses the reaction [HPr protein]-O-phospho-L-serine + phosphate + H(+) = [HPr protein]-L-serine + diphosphate. In terms of biological role, catalyzes the ATP- as well as the pyrophosphate-dependent phosphorylation of a specific serine residue in HPr, a phosphocarrier protein of the phosphoenolpyruvate-dependent sugar phosphotransferase system (PTS). HprK/P also catalyzes the pyrophosphate-producing, inorganic phosphate-dependent dephosphorylation (phosphorolysis) of seryl-phosphorylated HPr (P-Ser-HPr). This chain is HPr kinase/phosphorylase, found in Xanthomonas oryzae pv. oryzae (strain MAFF 311018).